The sequence spans 364 residues: Uroporphyrinogen decarboxylase (364 aa).

Substrate is bound by residues 28–32 (RQAGR), Asp-78, Tyr-160, Thr-215, and His-333.

It belongs to the uroporphyrinogen decarboxylase family. In terms of assembly, homodimer.

The protein localises to the cytoplasm. The enzyme catalyses uroporphyrinogen III + 4 H(+) = coproporphyrinogen III + 4 CO2. Its pathway is porphyrin-containing compound metabolism; protoporphyrin-IX biosynthesis; coproporphyrinogen-III from 5-aminolevulinate: step 4/4. In terms of biological role, catalyzes the decarboxylation of four acetate groups of uroporphyrinogen-III to yield coproporphyrinogen-III. The chain is Uroporphyrinogen decarboxylase from Burkholderia thailandensis (strain ATCC 700388 / DSM 13276 / CCUG 48851 / CIP 106301 / E264).